Here is a 368-residue protein sequence, read N- to C-terminus: Anti-sigma-X factor RsiX (368 aa).

The segment covering 73 to 87 (QPQQKEASQENAVTK) has biased composition (polar residues). Residues 73 to 101 (QPQQKEASQENAVTKTETEDSPKAASSLD) form a disordered region.

Its subcellular location is the cell membrane. Functionally, the anti-sigma factor for extracytoplasmic function (ECF) sigma factor SigX, inhibits SigX activity and stabilizes it. This chain is Anti-sigma-X factor RsiX (rsiX), found in Bacillus subtilis (strain 168).